Reading from the N-terminus, the 371-residue chain is tRNA (guanine(26)-N(2))-dimethyltransferase (371 aa).

Residues methionine 1–valine 370 enclose the Trm1 methyltransferase domain. S-adenosyl-L-methionine contacts are provided by arginine 36, arginine 66, aspartate 81, aspartate 107, and alanine 108. Zn(2+) is bound by residues cysteine 238, cysteine 241, cysteine 258, and cysteine 261.

This sequence belongs to the class I-like SAM-binding methyltransferase superfamily. Trm1 family.

The enzyme catalyses guanosine(26) in tRNA + 2 S-adenosyl-L-methionine = N(2)-dimethylguanosine(26) in tRNA + 2 S-adenosyl-L-homocysteine + 2 H(+). Dimethylates a single guanine residue at position 26 of a number of tRNAs using S-adenosyl-L-methionine as donor of the methyl groups. This is tRNA (guanine(26)-N(2))-dimethyltransferase from Halobacterium salinarum (strain ATCC 700922 / JCM 11081 / NRC-1) (Halobacterium halobium).